We begin with the raw amino-acid sequence, 147 residues long: Ubiquitin-conjugating enzyme E2 5A (147 aa).

Over residues 1 to 15 (MASKRIQKELKDLQK) the composition is skewed to basic and acidic residues. The segment at 1-24 (MASKRIQKELKDLQKDPPTSCSAG) is disordered. The UBC core domain maps to 1–147 (MASKRIQKEL…ARTWTQRYAM (147 aa)). Catalysis depends on C85, which acts as the Glycyl thioester intermediate.

It belongs to the ubiquitin-conjugating enzyme family.

It carries out the reaction S-ubiquitinyl-[E1 ubiquitin-activating enzyme]-L-cysteine + [E2 ubiquitin-conjugating enzyme]-L-cysteine = [E1 ubiquitin-activating enzyme]-L-cysteine + S-ubiquitinyl-[E2 ubiquitin-conjugating enzyme]-L-cysteine.. It functions in the pathway protein modification; protein ubiquitination. In terms of biological role, E2 conjugating enzyme that associates with the E3 ubiquitin-protein ligase EL5 to mediate ubiquitination of target proteins. This chain is Ubiquitin-conjugating enzyme E2 5A (UBC5A), found in Oryza sativa subsp. japonica (Rice).